The sequence spans 169 residues: uncharacterized protein (169 aa).

The next 2 helical transmembrane spans lie at 62–84 and 94–116; these read RWGF…LLGL and ALML…YWWF.

Its subcellular location is the cell membrane. This is an uncharacterized protein from Archaeoglobus fulgidus (strain ATCC 49558 / DSM 4304 / JCM 9628 / NBRC 100126 / VC-16).